Consider the following 201-residue polypeptide: MSKVLVLKSSILAGYSQSNQLSDYFVEQWREKHSADEITVRDLAANPIPVLDGELVGALRPSDAPLTPRQQEALALSDELIAELKAHDVIVIAAPMYNFNISTQLKNYFDLVARAGVTFRYTENGPEGLVTGKKAIVITSRGGIHKDGPTDLVTPYLSTFLGFIGITDVKFVFAEGIAYGPEMAAKAQSDAKAAIDSIVSA.

Residues Ser-10, 16 to 18 (SQS), 96 to 99 (MYNF), and 140 to 143 (SRGG) each bind FMN.

The protein belongs to the azoreductase type 1 family. In terms of assembly, homodimer. The cofactor is FMN.

The catalysed reaction is 2 a quinone + NADH + H(+) = 2 a 1,4-benzosemiquinone + NAD(+). The enzyme catalyses N,N-dimethyl-1,4-phenylenediamine + anthranilate + 2 NAD(+) = 2-(4-dimethylaminophenyl)diazenylbenzoate + 2 NADH + 2 H(+). Quinone reductase that provides resistance to thiol-specific stress caused by electrophilic quinones. Functionally, also exhibits azoreductase activity. Catalyzes the reductive cleavage of the azo bond in aromatic azo compounds to the corresponding amines. This is FMN-dependent NADH:quinone oxidoreductase from Escherichia coli O9:H4 (strain HS).